The following is a 435-amino-acid chain: GTPase Obg (435 aa).

One can recognise an Obg domain in the interval 6-164; it reads ADFVDRVKIF…RWLELELKIL (159 aa). Residues 165–335 enclose the OBG-type G domain; that stretch reads ADVGLVGYPN…LVSKLASIVR (171 aa). GTP is bound by residues 171–178, 196–200, 217–220, 287–290, and 316–318; these read GYPNVGKS, FTTLI, DIPG, NKID, and SAL. The Mg(2+) site is built by serine 178 and threonine 198. The OCT domain occupies 357 to 435; sequence RRLPEKFHLE…IGDFEFEYRE (79 aa).

The protein belongs to the TRAFAC class OBG-HflX-like GTPase superfamily. OBG GTPase family. As to quaternary structure, monomer. Requires Mg(2+) as cofactor.

Its subcellular location is the cytoplasm. Its function is as follows. An essential GTPase which binds GTP, GDP and possibly (p)ppGpp with moderate affinity, with high nucleotide exchange rates and a fairly low GTP hydrolysis rate. Plays a role in control of the cell cycle, stress response, ribosome biogenesis and in those bacteria that undergo differentiation, in morphogenesis control. This chain is GTPase Obg, found in Thermotoga sp. (strain RQ2).